A 709-amino-acid chain; its full sequence is Tyrosine-protein phosphatase cdc-14 (709 aa).

The 159-residue stretch at 196-354 folds into the Tyrosine-protein phosphatase domain; sequence DFNWIIPGKI…QKFCWSLSQS (159 aa). The Phosphocysteine intermediate role is filled by C295. Residues 366 to 371 carry the Nuclear localization signal motif; it reads KRNVRR. A Nuclear export signal motif is present at residues 372–381; sequence LVNQVDDINL. Disordered regions lie at residues 403–541, 573–594, and 628–661; these read VQVQ…LTRT, RYLS…GTSP, and ESKP…PYPS. Residues 404-413 show a composition bias toward polar residues; that stretch reads QVQNGRSTAP. Positions 463–479 are enriched in low complexity; that stretch reads TTSPNSSSSRRFVKSST. 2 stretches are compositionally biased toward polar residues: residues 480–490 and 501–521; these read PQMTVPSQAYL and PSKN…TPNG. A compositionally biased stretch (low complexity) spans 526–541; the sequence is RTRNSSGNTTSTLTRT. The span at 639–649 shows a compositional bias: polar residues; it reads PGTSKSTSSLK.

The protein belongs to the protein-tyrosine phosphatase family. Non-receptor class CDC14 subfamily.

It is found in the cytoplasm. It localises to the cytoskeleton. Its subcellular location is the microtubule organizing center. The protein localises to the centrosome. The protein resides in the spindle. It is found in the midbody. It localises to the nucleus. It catalyses the reaction O-phospho-L-tyrosyl-[protein] + H2O = L-tyrosyl-[protein] + phosphate. Inhibited by sodium orthovanadate. Weakly inhibited by sodium fluoride and okadaic acid. Protein phosphatase that negatively regulates the G1-to-S phase transition to inhibit the cell cycle and establish quiescence in cells of multiple lineages including vulval, hypodermal and intestinal. Promotes nuclear accumulation and activity of the cyclin-dependent kinase inhibitor cki-1 which leads to inhibition of G1 progression during vulval tissue development. Has been shown to not be required for cytokinesis. However, in the embryo, in a contrasting study, has been shown to act as a regulator of central spindle formation and cytokinesis, and may be required for localization of the spindle component zen-4, and its interacting partner air-2 at the spindle during late cell divisions. In terms of biological role, main regulator of cell cycle arrest in vulval precursor cells. The chain is Tyrosine-protein phosphatase cdc-14 from Caenorhabditis elegans.